The sequence spans 461 residues: Putative long chain fatty acid-CoA ligase VraA (461 aa).

The protein belongs to the ATP-dependent AMP-binding enzyme family.

The protein is Putative long chain fatty acid-CoA ligase VraA (vraA) of Staphylococcus haemolyticus (strain JCSC1435).